Reading from the N-terminus, the 249-residue chain is tRNA pseudouridine synthase A (249 aa).

The active-site Nucleophile is the Asp53. Tyr111 lines the substrate pocket.

It belongs to the tRNA pseudouridine synthase TruA family. As to quaternary structure, homodimer.

It carries out the reaction uridine(38/39/40) in tRNA = pseudouridine(38/39/40) in tRNA. Its function is as follows. Formation of pseudouridine at positions 38, 39 and 40 in the anticodon stem and loop of transfer RNAs. The sequence is that of tRNA pseudouridine synthase A from Streptococcus suis (strain 05ZYH33).